The chain runs to 1026 residues: Multidrug resistance protein MdtC (1026 aa).

11 helical membrane-spanning segments follow: residues 15 to 35 (ILIAAAITLCGILGFRLLPVA), 333 to 353 (EVEETLAISVALVILVVFLFL), 360 to 380 (LIPAVAVPVSLIGTFAAMYLC), 387 to 407 (LSLMALTIATGFVVDDAIVVL), 431 to 451 (VGFTVISMSLSLVAVFLPLLL), 463 to 483 (FAVTLSVAIGISLVVSLTLTP), 528 to 548 (LVGVVFLGTVALNIWLYIAIP), 853 to 873 (LILIVAAIATVYIVLGILYES), 897 to 917 (LFNAPFSLIALIGIMLLIGIV), 953 to 973 (PIMMTTLAALFGALPLVLSGG), and 984 to 1004 (ITIVGGLVMSQLLTLYTTPVV).

This sequence belongs to the resistance-nodulation-cell division (RND) (TC 2.A.6) family. MdtC subfamily. As to quaternary structure, part of a tripartite efflux system composed of MdtA, MdtB and MdtC. MdtC forms a heteromultimer with MdtB.

The protein resides in the cell inner membrane. This is Multidrug resistance protein MdtC from Salmonella enteritidis PT4 (strain P125109).